The primary structure comprises 94 residues: MLKPLGDRVVIEVLEAEEKTASGIVLPDSAKEKPQSGKIVAVGSGRVLDNGTKEPLEVAEGDTVIFAKYSGTEVTYEGTDYLILRESDILAITK.

This sequence belongs to the GroES chaperonin family. Heptamer of 7 subunits arranged in a ring. Interacts with the chaperonin GroEL.

The protein resides in the cytoplasm. Together with the chaperonin GroEL, plays an essential role in assisting protein folding. The GroEL-GroES system forms a nano-cage that allows encapsulation of the non-native substrate proteins and provides a physical environment optimized to promote and accelerate protein folding. GroES binds to the apical surface of the GroEL ring, thereby capping the opening of the GroEL channel. The polypeptide is Co-chaperonin GroES (Listeria monocytogenes serotype 4b (strain CLIP80459)).